The sequence spans 118 residues: Small ribosomal subunit protein uS13 (118 aa).

Residues 94–118 (GLPVRGQRTRTNARTRKGPRKAIKK) are disordered.

The protein belongs to the universal ribosomal protein uS13 family. As to quaternary structure, part of the 30S ribosomal subunit. Forms a loose heterodimer with protein S19. Forms two bridges to the 50S subunit in the 70S ribosome.

In terms of biological role, located at the top of the head of the 30S subunit, it contacts several helices of the 16S rRNA. In the 70S ribosome it contacts the 23S rRNA (bridge B1a) and protein L5 of the 50S subunit (bridge B1b), connecting the 2 subunits; these bridges are implicated in subunit movement. Contacts the tRNAs in the A and P-sites. In Thiobacillus denitrificans (strain ATCC 25259 / T1), this protein is Small ribosomal subunit protein uS13.